The primary structure comprises 87 residues: Small ribosomal subunit protein bS20 (87 aa).

Positions Met1–Ala22 are disordered. Residues Ala7–Ala19 show a composition bias toward basic residues.

It belongs to the bacterial ribosomal protein bS20 family.

In terms of biological role, binds directly to 16S ribosomal RNA. The sequence is that of Small ribosomal subunit protein bS20 from Neisseria gonorrhoeae (strain ATCC 700825 / FA 1090).